The chain runs to 300 residues: 33 kDa chaperonin (300 aa).

Disulfide bonds link cysteine 247/cysteine 249 and cysteine 280/cysteine 283.

Belongs to the HSP33 family. Post-translationally, under oxidizing conditions two disulfide bonds are formed involving the reactive cysteines. Under reducing conditions zinc is bound to the reactive cysteines and the protein is inactive.

Its subcellular location is the cytoplasm. Its function is as follows. Redox regulated molecular chaperone. Protects both thermally unfolding and oxidatively damaged proteins from irreversible aggregation. Plays an important role in the bacterial defense system toward oxidative stress. This is 33 kDa chaperonin from Prochlorococcus marinus subsp. pastoris (strain CCMP1986 / NIES-2087 / MED4).